The primary structure comprises 352 residues: Tropomodulin-3 (352 aa).

Residue S25 is modified to Phosphoserine.

The protein belongs to the tropomodulin family. As to quaternary structure, binds to the N-terminus of tropomyosin and to actin. Interacts with FLII. In terms of tissue distribution, ubiquitous.

The protein localises to the cytoplasm. The protein resides in the cytoskeleton. Blocks the elongation and depolymerization of the actin filaments at the pointed end. The Tmod/TM complex contributes to the formation of the short actin protofilament, which in turn defines the geometry of the membrane skeleton. This Mus musculus (Mouse) protein is Tropomodulin-3 (Tmod3).